Reading from the N-terminus, the 167-residue chain is Peptide deformylase (167 aa).

The Fe cation site is built by Cys-91 and His-133. Glu-134 is a catalytic residue. Residue His-137 coordinates Fe cation.

It belongs to the polypeptide deformylase family. Fe(2+) is required as a cofactor.

It catalyses the reaction N-terminal N-formyl-L-methionyl-[peptide] + H2O = N-terminal L-methionyl-[peptide] + formate. In terms of biological role, removes the formyl group from the N-terminal Met of newly synthesized proteins. Requires at least a dipeptide for an efficient rate of reaction. N-terminal L-methionine is a prerequisite for activity but the enzyme has broad specificity at other positions. The chain is Peptide deformylase from Tolumonas auensis (strain DSM 9187 / NBRC 110442 / TA 4).